The primary structure comprises 384 residues: Decapping nuclease RAI1 (384 aa).

E168 serves as a coordination point for a divalent metal cation. E217 serves as a coordination point for substrate. A divalent metal cation-binding residues include D219, E237, and L238. Residues K239 and Q263 each coordinate substrate.

This sequence belongs to the DXO/Dom3Z family. Interacts with RAT1; the interaction is direct, stabilizes RAT1 protein structure and stimulates its exoribonuclease activity. The interaction also stimulates RAI1 pyrophosphohydrolase activity, probably by recruiting it to mRNA substrates. It depends on a divalent metal cation as a cofactor.

It is found in the nucleus. The enzyme catalyses a 5'-end NAD(+)-phospho-ribonucleoside in mRNA + H2O = a 5'-end phospho-ribonucleoside in mRNA + NAD(+) + H(+). It carries out the reaction a 5'-end (N(7)-methyl 5'-triphosphoguanosine)-ribonucleoside-ribonucleotide in mRNA + H2O = a (N(7)-methyl 5'-triphosphoguanosine)-nucleoside + a 5'-end phospho-ribonucleoside in mRNA + H(+). It catalyses the reaction a 5'-end triphospho-ribonucleoside in mRNA + H2O = a 5'-end phospho-ribonucleoside in mRNA + diphosphate + H(+). In terms of biological role, decapping enzyme for NAD-capped RNAs: specifically hydrolyzes the nicotinamide adenine dinucleotide (NAD) cap from a subset of RNAs by removing the entire NAD moiety from the 5'-end of an NAD-capped RNA. The NAD-cap is present at the 5'-end of some RNAs and snoRNAs. In contrast to the canonical 5'-end N7 methylguanosine (m7G) cap, the NAD cap promotes mRNA decay. Also acts as a non-canonical decapping enzyme that removes the entire cap structure of m7G capped or incompletely capped RNAs. Has decapping activity toward incomplete 5'-end m7G cap mRNAs such as unmethylated 5'-end-capped RNA (cap0), while it has no activity toward 2'-O-ribose methylated m7G cap (cap1). Also possesses RNA 5'-pyrophosphohydrolase activity by hydrolyzing the 5'-end triphosphate to release pyrophosphates. Stimulates exoribonuclease activity of Rat1, allowing it to degrade RNAs with stable secondary structure more effectively. The sequence is that of Decapping nuclease RAI1 (RAI1) from Kluyveromyces lactis (strain ATCC 8585 / CBS 2359 / DSM 70799 / NBRC 1267 / NRRL Y-1140 / WM37) (Yeast).